A 137-amino-acid chain; its full sequence is Small ribosomal subunit protein uS12 (137 aa).

Positions 1-57 (MPTINQLVRKPRQSKIKKSDSPALNKGFNSKKKKFTDLNSPQKRGVCTRVGTMTPRK) are disordered. Aspartate 102 is subject to 3-methylthioaspartic acid. Positions 118-137 (SGVDGRRQGRSLYGTKKPKN) are disordered.

The protein belongs to the universal ribosomal protein uS12 family. In terms of assembly, part of the 30S ribosomal subunit. Contacts proteins S8 and S17. May interact with IF1 in the 30S initiation complex.

In terms of biological role, with S4 and S5 plays an important role in translational accuracy. Interacts with and stabilizes bases of the 16S rRNA that are involved in tRNA selection in the A site and with the mRNA backbone. Located at the interface of the 30S and 50S subunits, it traverses the body of the 30S subunit contacting proteins on the other side and probably holding the rRNA structure together. The combined cluster of proteins S8, S12 and S17 appears to hold together the shoulder and platform of the 30S subunit. The sequence is that of Small ribosomal subunit protein uS12 from Staphylococcus aureus (strain COL).